The following is a 266-amino-acid chain: Phosphatidylglycerol--prolipoprotein diacylglyceryl transferase (266 aa).

The next 7 helical transmembrane spans lie at 21 to 41 (LAIRWYGLMYLVGFLFAMWLA), 60 to 80 (LLFAGFLGVVLGGRIGYVLFY), 95 to 115 (VWTGGMSFHGGLLGVMTAMLW), 124 to 144 (FFSVADFIAPLVPFGLGMGRM), 176 to 196 (SQLYEAFLEGFVLLIILNIFI), 203 to 223 (GAVSGLFLIGYGSFRFIIEYF), and 236 to 256 (WISMGQILSSPMIIFGALLML). Arg-143 is a binding site for a 1,2-diacyl-sn-glycero-3-phospho-(1'-sn-glycerol).

The protein belongs to the Lgt family.

Its subcellular location is the cell inner membrane. The enzyme catalyses L-cysteinyl-[prolipoprotein] + a 1,2-diacyl-sn-glycero-3-phospho-(1'-sn-glycerol) = an S-1,2-diacyl-sn-glyceryl-L-cysteinyl-[prolipoprotein] + sn-glycerol 1-phosphate + H(+). The protein operates within protein modification; lipoprotein biosynthesis (diacylglyceryl transfer). Catalyzes the transfer of the diacylglyceryl group from phosphatidylglycerol to the sulfhydryl group of the N-terminal cysteine of a prolipoprotein, the first step in the formation of mature lipoproteins. This Photobacterium profundum (strain SS9) protein is Phosphatidylglycerol--prolipoprotein diacylglyceryl transferase.